The following is a 124-amino-acid chain: Large ribosomal subunit protein bL12 (124 aa).

It belongs to the bacterial ribosomal protein bL12 family. As to quaternary structure, homodimer. Part of the ribosomal stalk of the 50S ribosomal subunit. Forms a multimeric L10(L12)X complex, where L10 forms an elongated spine to which 2 to 4 L12 dimers bind in a sequential fashion. Binds GTP-bound translation factors.

In terms of biological role, forms part of the ribosomal stalk which helps the ribosome interact with GTP-bound translation factors. Is thus essential for accurate translation. In Xanthobacter autotrophicus (strain ATCC BAA-1158 / Py2), this protein is Large ribosomal subunit protein bL12.